We begin with the raw amino-acid sequence, 368 residues long: tRNA-specific 2-thiouridylase MnmA (368 aa).

ATP is bound by residues glycine 12 to serine 19 and methionine 38. Positions asparagine 98 to aspartate 100 are interaction with target base in tRNA. The active-site Nucleophile is the cysteine 103. Cysteines 103 and 200 form a disulfide. Position 128 (glycine 128) interacts with ATP. The interaction with tRNA stretch occupies residues lysine 150–glutamine 152. Cysteine 200 functions as the Cysteine persulfide intermediate in the catalytic mechanism. The tract at residues arginine 311–tyrosine 312 is interaction with tRNA.

This sequence belongs to the MnmA/TRMU family.

The protein resides in the cytoplasm. It carries out the reaction S-sulfanyl-L-cysteinyl-[protein] + uridine(34) in tRNA + AH2 + ATP = 2-thiouridine(34) in tRNA + L-cysteinyl-[protein] + A + AMP + diphosphate + H(+). Its function is as follows. Catalyzes the 2-thiolation of uridine at the wobble position (U34) of tRNA, leading to the formation of s(2)U34. In Aeromonas hydrophila subsp. hydrophila (strain ATCC 7966 / DSM 30187 / BCRC 13018 / CCUG 14551 / JCM 1027 / KCTC 2358 / NCIMB 9240 / NCTC 8049), this protein is tRNA-specific 2-thiouridylase MnmA.